The primary structure comprises 893 residues: Translation initiation factor IF-2 (893 aa).

Disordered stretches follow at residues 51 to 203 (KEHG…AEAE) and 216 to 300 (EENE…SMQH). Basic and acidic residues-rich tracts occupy residues 102–203 (ALEE…AEAE), 216–238 (EENE…DADY), and 245–261 (HARE…EQQP). The region spanning 392–561 (GRAPVVTIMG…LLQSEVLELT (170 aa)) is the tr-type G domain. A G1 region spans residues 401–408 (GHVDHGKT). 401-408 (GHVDHGKT) lines the GTP pocket. Residues 426-430 (GITQH) are G2. The tract at residues 447-450 (DTPG) is G3. GTP is bound by residues 447 to 451 (DTPGH) and 501 to 504 (NKID). The interval 501 to 504 (NKID) is G4. The interval 537 to 539 (SAK) is G5.

This sequence belongs to the TRAFAC class translation factor GTPase superfamily. Classic translation factor GTPase family. IF-2 subfamily.

The protein localises to the cytoplasm. Functionally, one of the essential components for the initiation of protein synthesis. Protects formylmethionyl-tRNA from spontaneous hydrolysis and promotes its binding to the 30S ribosomal subunits. Also involved in the hydrolysis of GTP during the formation of the 70S ribosomal complex. The protein is Translation initiation factor IF-2 of Aliivibrio fischeri (strain MJ11) (Vibrio fischeri).